The chain runs to 351 residues: Serine/threonine-protein kinase mos (351 aa).

Positions 71-340 constitute a Protein kinase domain; sequence FSIDGVIGSG…ERRTDDTENL (270 aa). Residues 77 to 85 and Lys98 contribute to the ATP site; that span reads IGSGGFGSV. The active-site Proton acceptor is Asp194.

The protein belongs to the protein kinase superfamily. Ser/Thr protein kinase family.

It catalyses the reaction L-seryl-[protein] + ATP = O-phospho-L-seryl-[protein] + ADP + H(+). The catalysed reaction is L-threonyl-[protein] + ATP = O-phospho-L-threonyl-[protein] + ADP + H(+). Its function is as follows. Suppresses the mitotic cell cycle in oocytes, forcing them to undergo meiosis II to produce haploid gametes. Acts as a MAPK kinase kinase (MAP3K) that acts upstream of MAP kinase in oocytes. The polypeptide is Serine/threonine-protein kinase mos (Patiria pectinifera (Starfish)).